Reading from the N-terminus, the 228-residue chain is Sugar fermentation stimulation protein homolog (228 aa).

It belongs to the SfsA family.

This is Sugar fermentation stimulation protein homolog from Desulfitobacterium hafniense (strain DSM 10664 / DCB-2).